The primary structure comprises 268 residues: UPF0328 protein ECU05_1640/ECU11_0090 (268 aa).

Belongs to the UPF0328 family.

In Encephalitozoon cuniculi (strain GB-M1) (Microsporidian parasite), this protein is UPF0328 protein ECU05_1640/ECU11_0090.